Consider the following 507-residue polypeptide: MSTDGESPEEPRWKAVASPKASTMPEKRGSAQAASGSWLQGFGHPSVYHAAFVIFLEFFAWGLLTTPMLTVLHETFPQHTFLMNGLIQGVKGLLSFLSAPLIGALSDVWGRKPFLLGTVFFTCFPIPLMRINPWWYFGMISVSGVFSVTFSVIFAYVADFTQEHERSTAYGWVSATFAASLVSSPAIGTYLSANYGDSLVVLVATLVALLDICFILIAVPESLSEKIRPASWGAQISWKQADPFASLKKVGKDSTVLLICITVFLSYLPEAGQYSSFFLYLRQVIGFGSVKIVAFIAMVGILSIVAQTVFLSKLMRSLGNKNTVLLGLGFQMLQLAWYGFGSQAWMMWAAGTVAAMSSITFPAVSALISRNAESDQQGVAQGIVTGIRGLCNGLGPALYGFIFYMFHVELSELGPKLNSDDDPLQGAFIPGPPFLFGACIVLMSFLVALFIPEYRKTSGVQKHNNSTSGSLSTPPERGSDEDIEPLLQDSSIWELSFEEPGNQCTEL.

The interval 1–27 (MSTDGESPEEPRWKAVASPKASTMPEK) is disordered. Over 1–51 (MSTDGESPEEPRWKAVASPKASTMPEKRGSAQAASGSWLQGFGHPSVYHAA) the chain is Extracellular. A helical transmembrane segment spans residues 52 to 72 (FVIFLEFFAWGLLTTPMLTVL). Residues 73–84 (HETFPQHTFLMN) lie on the Cytoplasmic side of the membrane. The helical transmembrane segment at 85 to 105 (GLIQGVKGLLSFLSAPLIGAL) threads the bilayer. Residues 106 to 113 (SDVWGRKP) are Extracellular-facing. Residues 114–134 (FLLGTVFFTCFPIPLMRINPW) traverse the membrane as a helical segment. Over 135-136 (WY) the chain is Cytoplasmic. Residues 137 to 157 (FGMISVSGVFSVTFSVIFAYV) form a helical membrane-spanning segment. Over 158-170 (ADFTQEHERSTAY) the chain is Extracellular. Residues 171 to 191 (GWVSATFAASLVSSPAIGTYL) form a helical membrane-spanning segment. Topologically, residues 192–198 (SANYGDS) are cytoplasmic. A helical transmembrane segment spans residues 199–219 (LVVLVATLVALLDICFILIAV). The Extracellular portion of the chain corresponds to 220 to 257 (PESLSEKIRPASWGAQISWKQADPFASLKKVGKDSTVL). Residues 258–278 (LICITVFLSYLPEAGQYSSFF) traverse the membrane as a helical segment. Topologically, residues 279–283 (LYLRQ) are cytoplasmic. A helical membrane pass occupies residues 284 to 304 (VIGFGSVKIVAFIAMVGILSI). The Extracellular segment spans residues 305-323 (VAQTVFLSKLMRSLGNKNT). The chain crosses the membrane as a helical span at residues 324–344 (VLLGLGFQMLQLAWYGFGSQA). At 345–347 (WMM) the chain is on the cytoplasmic side. The chain crosses the membrane as a helical span at residues 348–368 (WAAGTVAAMSSITFPAVSALI). Over 369-389 (SRNAESDQQGVAQGIVTGIRG) the chain is Extracellular. A helical transmembrane segment spans residues 390 to 410 (LCNGLGPALYGFIFYMFHVEL). Topologically, residues 411 to 430 (SELGPKLNSDDDPLQGAFIP) are cytoplasmic. Residues 431 to 451 (GPPFLFGACIVLMSFLVALFI) traverse the membrane as a helical segment. Residues 452–507 (PEYRKTSGVQKHNNSTSGSLSTPPERGSDEDIEPLLQDSSIWELSFEEPGNQCTEL) lie on the Extracellular side of the membrane. Polar residues predominate over residues 459 to 473 (GVQKHNNSTSGSLST). The interval 459–483 (GVQKHNNSTSGSLSTPPERGSDEDI) is disordered. N-linked (GlcNAc...) asparagine glycans are attached at residues N464 and N465.

It belongs to the major facilitator superfamily.

Its subcellular location is the membrane. The sequence is that of Hippocampus abundant transcript-like protein 1 from Mus musculus (Mouse).